The following is a 395-amino-acid chain: Tyrosine--tRNA ligase (395 aa).

A 'HIGH' region motif is present at residues 42 to 51 (PTAPDIHLGH). The 'KMSKS' region motif lies at 226–230 (KMSKS). K229 provides a ligand contact to ATP. The 61-residue stretch at 334 to 394 (IAISNLLKDA…GKRKFARITL (61 aa)) folds into the S4 RNA-binding domain.

Belongs to the class-I aminoacyl-tRNA synthetase family. TyrS type 2 subfamily. In terms of assembly, homodimer.

It is found in the cytoplasm. The enzyme catalyses tRNA(Tyr) + L-tyrosine + ATP = L-tyrosyl-tRNA(Tyr) + AMP + diphosphate + H(+). Its function is as follows. Catalyzes the attachment of tyrosine to tRNA(Tyr) in a two-step reaction: tyrosine is first activated by ATP to form Tyr-AMP and then transferred to the acceptor end of tRNA(Tyr). In Photobacterium profundum (strain SS9), this protein is Tyrosine--tRNA ligase.